The primary structure comprises 286 residues: Polyamine aminopropyltransferase (286 aa).

The 236-residue stretch at 2–237 (DLWFSEVHTP…GYWLFGFASK (236 aa)) folds into the PABS domain. Residue Gln31 participates in S-methyl-5'-thioadenosine binding. Asp86 is a binding site for spermidine. S-methyl-5'-thioadenosine is bound by residues Glu106 and 137 to 138 (NG). Asp155 (proton acceptor) is an active-site residue.

This sequence belongs to the spermidine/spermine synthase family. As to quaternary structure, homodimer or homotetramer.

It localises to the cytoplasm. It carries out the reaction S-adenosyl 3-(methylsulfanyl)propylamine + putrescine = S-methyl-5'-thioadenosine + spermidine + H(+). Its pathway is amine and polyamine biosynthesis; spermidine biosynthesis; spermidine from putrescine: step 1/1. Catalyzes the irreversible transfer of a propylamine group from the amino donor S-adenosylmethioninamine (decarboxy-AdoMet) to putrescine (1,4-diaminobutane) to yield spermidine. The polypeptide is Polyamine aminopropyltransferase (Streptococcus pneumoniae serotype 4 (strain ATCC BAA-334 / TIGR4)).